We begin with the raw amino-acid sequence, 322 residues long: Reticulocalbin-1 (322 aa).

The first 19 residues, 1-19, serve as a signal peptide directing secretion; that stretch reads MDVLGFICAVFLGTVVLHA. Asn-44 is a glycosylation site (N-linked (GlcNAc...) asparagine). EF-hand domains follow at residues 70-105, 106-141, 157-192, 194-229, 235-270, and 271-306; these read ESKD…VQKR, YVYE…YYLS, KMLP…EEFE, MKDI…HEDR, WVKT…QDYD, and HAQA…FVGS. Positions 83, 85, 87, 89, 94, 119, 121, 123, 125, 130, 170, 172, 174, 181, 207, 209, 211, 213, 218, 248, 250, 252, 254, 259, 284, 286, 288, 290, and 295 each coordinate Ca(2+). The Prevents secretion from ER motif lies at 319–322; the sequence is HDEL.

This sequence belongs to the CREC family.

The protein localises to the endoplasmic reticulum lumen. Functionally, may regulate calcium-dependent activities in the endoplasmic reticulum lumen or post-ER compartment. The polypeptide is Reticulocalbin-1 (rcn1) (Takifugu rubripes (Japanese pufferfish)).